Consider the following 519-residue polypeptide: Probable cytosol aminopeptidase (519 aa).

The Mn(2+) site is built by K283 and D288. The active site involves K295. Mn(2+) contacts are provided by D306, D365, and E367. Residue R369 is part of the active site.

Belongs to the peptidase M17 family. Requires Mn(2+) as cofactor.

Its subcellular location is the cytoplasm. The catalysed reaction is Release of an N-terminal amino acid, Xaa-|-Yaa-, in which Xaa is preferably Leu, but may be other amino acids including Pro although not Arg or Lys, and Yaa may be Pro. Amino acid amides and methyl esters are also readily hydrolyzed, but rates on arylamides are exceedingly low.. It carries out the reaction Release of an N-terminal amino acid, preferentially leucine, but not glutamic or aspartic acids.. Functionally, presumably involved in the processing and regular turnover of intracellular proteins. Catalyzes the removal of unsubstituted N-terminal amino acids from various peptides. The chain is Probable cytosol aminopeptidase from Mycobacterium marinum (strain ATCC BAA-535 / M).